A 227-amino-acid polypeptide reads, in one-letter code: N-acetyltransferase family 8 member 7 (227 aa).

2 consecutive transmembrane segments (helical) span residues 36–56 (MLLLPRTLLLLLGVPLTLFLA) and 58–78 (GSWLLVLLSILTLFLSLWFLA). An N-acetyltransferase domain is found at 61 to 220 (LLVLLSILTL…PMINLKYSLT (160 aa)).

It belongs to the camello family.

Its subcellular location is the membrane. The enzyme catalyses L-lysyl-[protein] + acetyl-CoA = N(6)-acetyl-L-lysyl-[protein] + CoA + H(+). Has histone acetyltransferase activity in vitro, with specificity for histone H4. The chain is N-acetyltransferase family 8 member 7 from Mus musculus (Mouse).